Consider the following 593-residue polypeptide: Transcription factor ATEG_07667 (593 aa).

Positions 18-47 (CTQCYKAKCRCVRTPSGDTCERCIRLKKRC) form a DNA-binding region, zn(2)-C6 fungal-type.

Its subcellular location is the nucleus. Functionally, transcriptional regulator that regulates both the azasperpyranone A biosynthesis clusters A and B. Specifically up-regulates the expression of the cluster A and B specific transcription factors ATEG_03638 and ATEG_07666, which in turn activate the expression of their respective clusters. The polypeptide is Transcription factor ATEG_07667 (Aspergillus terreus (strain NIH 2624 / FGSC A1156)).